The sequence spans 152 residues: 3-hydroxyacyl-[acyl-carrier-protein] dehydratase FabZ (152 aa).

His58 is a catalytic residue.

The protein belongs to the thioester dehydratase family. FabZ subfamily.

It is found in the cytoplasm. It catalyses the reaction a (3R)-hydroxyacyl-[ACP] = a (2E)-enoyl-[ACP] + H2O. In terms of biological role, involved in unsaturated fatty acids biosynthesis. Catalyzes the dehydration of short chain beta-hydroxyacyl-ACPs and long chain saturated and unsaturated beta-hydroxyacyl-ACPs. This is 3-hydroxyacyl-[acyl-carrier-protein] dehydratase FabZ from Prochlorococcus marinus (strain MIT 9312).